The chain runs to 373 residues: Partitioning protein REP1 (373 aa).

An interaction with REP2 region spans residues 1–76 (MNGERLLACI…EKELDWPDPA (76 aa)). The interval 1-129 (MNGERLLACI…LNRRGKGIRR (129 aa)) is interaction with REP2 and self-association. The nuclear localization stretch occupies residues 349 to 373 (FEEHWKPVDVEVEFRCKFKERKVDG).

Interacts with REP2.

The protein localises to the nucleus. Its function is as follows. Part of the plasmid partitioning system, which ensures the equal distribution of replicated plasmid molecules to daughter cells. The plasmids exist as well-organized plasmid foci within the nucleus that stay together throughout the cell-cycle and act as entity during segregation, effetively reducing copy number to one. Plasmid partitioning requires the proteins REP1, REP2, and a cis-acting locus STB (REP3). REP1-REP2 stably associate with CSE4-containing chromatin at STB during S-phase, marking the locus with a centromeric tag, and thereby probably catching mitotic spindle microtubules to the plasmid cluster and coupling plasmid segregation to chromosome segregation. REP1-REP2 are required to recruit the cohesin complex to the STB locus for pairing of the replicated plasmid cluster, a prerequisite for successful plasmid segregation. REP1-REP2 also negatively regulate expression of site-specific recombinase FLP and of RAF1. This is Partitioning protein REP1 (REP1) from Saccharomyces cerevisiae (strain ATCC 204508 / S288c) (Baker's yeast).